The chain runs to 174 residues: 3-hydroxyanthranilate 3,4-dioxygenase (174 aa).

R47 is an O2 binding site. H51, E57, and H95 together coordinate Fe cation. Residue E57 participates in substrate binding. Residues R99 and E110 each contribute to the substrate site. Fe cation is bound by residues C125, C128, C162, and C165.

Belongs to the 3-HAO family. As to quaternary structure, homodimer. The cofactor is Fe(2+).

The enzyme catalyses 3-hydroxyanthranilate + O2 = (2Z,4Z)-2-amino-3-carboxymuconate 6-semialdehyde. It participates in cofactor biosynthesis; NAD(+) biosynthesis; quinolinate from L-kynurenine: step 3/3. Its function is as follows. Catalyzes the oxidative ring opening of 3-hydroxyanthranilate to 2-amino-3-carboxymuconate semialdehyde, which spontaneously cyclizes to quinolinate. This chain is 3-hydroxyanthranilate 3,4-dioxygenase, found in Burkholderia lata (strain ATCC 17760 / DSM 23089 / LMG 22485 / NCIMB 9086 / R18194 / 383).